Reading from the N-terminus, the 117-residue chain is EVKLVESGGGLVQPGGSLRLSCATSGFTFTDYYMSWVRQPPGKALEWLGFIRNKABGYTTEYSAVKGRFTISRBBSZGILYLQMNTLRAQDSATYYCARDITEFAYWGZGTLVTVSS.

The 113-residue stretch at 1–113 (EVKLVESGGG…FAYWGZGTLV (113 aa)) folds into the Ig-like domain.

This is Ig heavy chain V region MOPC 47A from Mus musculus (Mouse).